A 356-amino-acid chain; its full sequence is Probable dual-specificity RNA methyltransferase RlmN (356 aa).

Glu-97 serves as the catalytic Proton acceptor. In terms of domain architecture, Radical SAM core spans 103 to 333; the sequence is YHHGNSVCIS…VTIRREMGSD (231 aa). The cysteines at positions 110 and 338 are disulfide-linked. 3 residues coordinate [4Fe-4S] cluster: Cys-117, Cys-121, and Cys-124. S-adenosyl-L-methionine contacts are provided by residues 164-165, Ser-196, 219-221, and Asn-295; these read GE and SLH. Catalysis depends on Cys-338, which acts as the S-methylcysteine intermediate.

The protein belongs to the radical SAM superfamily. RlmN family. Requires [4Fe-4S] cluster as cofactor.

It localises to the cytoplasm. It carries out the reaction adenosine(2503) in 23S rRNA + 2 reduced [2Fe-2S]-[ferredoxin] + 2 S-adenosyl-L-methionine = 2-methyladenosine(2503) in 23S rRNA + 5'-deoxyadenosine + L-methionine + 2 oxidized [2Fe-2S]-[ferredoxin] + S-adenosyl-L-homocysteine. The enzyme catalyses adenosine(37) in tRNA + 2 reduced [2Fe-2S]-[ferredoxin] + 2 S-adenosyl-L-methionine = 2-methyladenosine(37) in tRNA + 5'-deoxyadenosine + L-methionine + 2 oxidized [2Fe-2S]-[ferredoxin] + S-adenosyl-L-homocysteine. In terms of biological role, specifically methylates position 2 of adenine 2503 in 23S rRNA and position 2 of adenine 37 in tRNAs. This chain is Probable dual-specificity RNA methyltransferase RlmN, found in Lachnoclostridium phytofermentans (strain ATCC 700394 / DSM 18823 / ISDg) (Clostridium phytofermentans).